The chain runs to 335 residues: S-adenosylmethionine:tRNA ribosyltransferase-isomerase (335 aa).

This sequence belongs to the QueA family. In terms of assembly, monomer.

It is found in the cytoplasm. The catalysed reaction is 7-aminomethyl-7-carbaguanosine(34) in tRNA + S-adenosyl-L-methionine = epoxyqueuosine(34) in tRNA + adenine + L-methionine + 2 H(+). Its pathway is tRNA modification; tRNA-queuosine biosynthesis. Functionally, transfers and isomerizes the ribose moiety from AdoMet to the 7-aminomethyl group of 7-deazaguanine (preQ1-tRNA) to give epoxyqueuosine (oQ-tRNA). The protein is S-adenosylmethionine:tRNA ribosyltransferase-isomerase of Thermosipho africanus (strain TCF52B).